A 95-amino-acid polypeptide reads, in one-letter code: Co-chaperonin GroES (95 aa).

It belongs to the GroES chaperonin family. As to quaternary structure, heptamer of 7 subunits arranged in a ring. Interacts with the chaperonin GroEL.

It is found in the cytoplasm. Functionally, together with the chaperonin GroEL, plays an essential role in assisting protein folding. The GroEL-GroES system forms a nano-cage that allows encapsulation of the non-native substrate proteins and provides a physical environment optimized to promote and accelerate protein folding. GroES binds to the apical surface of the GroEL ring, thereby capping the opening of the GroEL channel. The polypeptide is Co-chaperonin GroES (Geobacter sulfurreducens (strain ATCC 51573 / DSM 12127 / PCA)).